A 444-amino-acid polypeptide reads, in one-letter code: Adenylosuccinate synthetase (444 aa).

Residues 13 to 19 (GDEGKGK) and 41 to 43 (GHT) each bind GTP. Aspartate 14 serves as the catalytic Proton acceptor. Aspartate 14 and glycine 41 together coordinate Mg(2+). IMP contacts are provided by residues 14–17 (DEGK), 39–42 (NAGH), threonine 129, arginine 143, glutamine 224, threonine 239, and arginine 303. The active-site Proton donor is histidine 42. 299–305 (TTTGRRR) contacts substrate. GTP is bound by residues arginine 305, 331–333 (KLD), and 413–415 (SLG).

The protein belongs to the adenylosuccinate synthetase family. In terms of assembly, homodimer. Requires Mg(2+) as cofactor.

The protein resides in the cytoplasm. It catalyses the reaction IMP + L-aspartate + GTP = N(6)-(1,2-dicarboxyethyl)-AMP + GDP + phosphate + 2 H(+). Its pathway is purine metabolism; AMP biosynthesis via de novo pathway; AMP from IMP: step 1/2. Its function is as follows. Plays an important role in the de novo pathway of purine nucleotide biosynthesis. Catalyzes the first committed step in the biosynthesis of AMP from IMP. The protein is Adenylosuccinate synthetase of Synechocystis sp. (strain ATCC 27184 / PCC 6803 / Kazusa).